The following is a 209-amino-acid chain: Superoxide dismutase [Mn/Fe] (209 aa).

4 residues coordinate Fe(3+): H38, H90, D172, and H176. Residues H38, H90, D172, and H176 each contribute to the Mn(2+) site.

It belongs to the iron/manganese superoxide dismutase family. Mn(2+) is required as a cofactor. Fe(3+) serves as cofactor.

It catalyses the reaction 2 superoxide + 2 H(+) = H2O2 + O2. Destroys superoxide anion radicals which are normally produced within the cells and which are toxic to biological systems. Catalyzes the dismutation of superoxide anion radicals into O2 and H2O2 by successive reduction and oxidation of the transition metal ion at the active site. In Rickettsia bellii (strain RML369-C), this protein is Superoxide dismutase [Mn/Fe] (sodB).